The sequence spans 200 residues: GTP cyclohydrolase-2 (200 aa).

50–54 (RIHSE) provides a ligand contact to GTP. Zn(2+)-binding residues include Cys55, Cys66, and Cys68. Residues Gln71, 93 to 95 (EGR), and Thr115 each bind GTP. The Proton acceptor role is filled by Asp127. The active-site Nucleophile is Arg129. Positions 150 and 155 each coordinate GTP.

Belongs to the GTP cyclohydrolase II family. The cofactor is Zn(2+).

The catalysed reaction is GTP + 4 H2O = 2,5-diamino-6-hydroxy-4-(5-phosphoribosylamino)-pyrimidine + formate + 2 phosphate + 3 H(+). It functions in the pathway cofactor biosynthesis; riboflavin biosynthesis; 5-amino-6-(D-ribitylamino)uracil from GTP: step 1/4. Functionally, catalyzes the conversion of GTP to 2,5-diamino-6-ribosylamino-4(3H)-pyrimidinone 5'-phosphate (DARP), formate and pyrophosphate. The protein is GTP cyclohydrolase-2 of Acinetobacter baylyi (strain ATCC 33305 / BD413 / ADP1).